The sequence spans 156 residues: SsrA-binding protein (156 aa).

Residues 135–150 (KRDTIKDREWQRDRSR) are compositionally biased toward basic and acidic residues. Residues 135-156 (KRDTIKDREWQRDRSRIMKKNT) form a disordered region.

The protein belongs to the SmpB family.

The protein localises to the cytoplasm. Required for rescue of stalled ribosomes mediated by trans-translation. Binds to transfer-messenger RNA (tmRNA), required for stable association of tmRNA with ribosomes. tmRNA and SmpB together mimic tRNA shape, replacing the anticodon stem-loop with SmpB. tmRNA is encoded by the ssrA gene; the 2 termini fold to resemble tRNA(Ala) and it encodes a 'tag peptide', a short internal open reading frame. During trans-translation Ala-aminoacylated tmRNA acts like a tRNA, entering the A-site of stalled ribosomes, displacing the stalled mRNA. The ribosome then switches to translate the ORF on the tmRNA; the nascent peptide is terminated with the 'tag peptide' encoded by the tmRNA and targeted for degradation. The ribosome is freed to recommence translation, which seems to be the essential function of trans-translation. The sequence is that of SsrA-binding protein from Legionella pneumophila (strain Corby).